We begin with the raw amino-acid sequence, 328 residues long: MPLHHLTRFPRLELIGAPTPLEYLPRLSDYLGREIYIKRDDVTPIAMGGNKLRKLEFLVADALREGADTLITAGAIQSNHVRQTVAVAAKLGLHCVALLENPIGTTAENYLTNGNRLLLDLFNTQIEMCDALTDPDAQLQTLATRIEAQGFRPYVIPVGGSSALGAMGYVESALEIAQQCAEVVGLSSVVVASGSAGTHAGLAVGLEHLMPDVELIGVTVSRSVAEQKPRVISLQQAIAGQLALTATADIHLWDDYFAPGYGVPNDAGMEAVKLLASLEGVLLDPVYTGKAMAGLIDGISQKRFNDDGPILFIHTGGAPALFAYHPHV.

Lysine 51 carries the N6-(pyridoxal phosphate)lysine modification.

This sequence belongs to the ACC deaminase/D-cysteine desulfhydrase family. Homodimer. Pyridoxal 5'-phosphate is required as a cofactor.

It catalyses the reaction D-cysteine + H2O = hydrogen sulfide + pyruvate + NH4(+) + H(+). Functionally, catalyzes the alpha,beta-elimination reaction of D-cysteine and of several D-cysteine derivatives. It could be a defense mechanism against D-cysteine. In Salmonella paratyphi C (strain RKS4594), this protein is D-cysteine desulfhydrase.